A 398-amino-acid polypeptide reads, in one-letter code: Nonsense-mediated decay protein 4 (398 aa).

A disordered region spans residues 327-355 (PVTSNYRGKNNRGRNNRGRRGNKRRERER). Residues 335–350 (KNNRGRNNRGRRGNKR) show a composition bias toward basic residues.

It is found in the cytoplasm. In terms of biological role, involved in nonsense-mediated decay of mRNAs containing premature stop codons. The polypeptide is Nonsense-mediated decay protein 4 (NMD4) (Candida albicans (strain SC5314 / ATCC MYA-2876) (Yeast)).